We begin with the raw amino-acid sequence, 1203 residues long: DNA-directed RNA polymerase subunit beta' (1203 aa).

Zn(2+) contacts are provided by Cys-60, Cys-62, Cys-75, and Cys-78. Residues Asp-449, Asp-451, and Asp-453 each coordinate Mg(2+). Residues Cys-818, Cys-892, Cys-899, and Cys-902 each contribute to the Zn(2+) site. The segment at 1180–1203 is disordered; the sequence is RNLESGLDMPESAEESSEEETQTV. Residues 1190 to 1203 show a composition bias toward acidic residues; that stretch reads ESAEESSEEETQTV.

This sequence belongs to the RNA polymerase beta' chain family. The RNAP catalytic core consists of 2 alpha, 1 beta, 1 beta' and 1 omega subunit. When a sigma factor is associated with the core the holoenzyme is formed, which can initiate transcription. Mg(2+) serves as cofactor. The cofactor is Zn(2+).

The catalysed reaction is RNA(n) + a ribonucleoside 5'-triphosphate = RNA(n+1) + diphosphate. In terms of biological role, DNA-dependent RNA polymerase catalyzes the transcription of DNA into RNA using the four ribonucleoside triphosphates as substrates. This is DNA-directed RNA polymerase subunit beta' from Oceanobacillus iheyensis (strain DSM 14371 / CIP 107618 / JCM 11309 / KCTC 3954 / HTE831).